The chain runs to 193 residues: Ion-translocating oxidoreductase complex subunit A (193 aa).

6 helical membrane passes run 5–25, 47–67, 72–92, 102–122, 134–154, and 171–191; these read LLLF…FLGL, FVMT…LVPL, LRTL…EMVV, LLGI…VALL, AVYG…FAAI, and SIAL…TGLV.

This sequence belongs to the NqrDE/RnfAE family. In terms of assembly, the complex is composed of six subunits: RnfA, RnfB, RnfC, RnfD, RnfE and RnfG.

The protein localises to the cell inner membrane. In terms of biological role, part of a membrane-bound complex that couples electron transfer with translocation of ions across the membrane. The protein is Ion-translocating oxidoreductase complex subunit A of Serratia proteamaculans (strain 568).